Here is a 319-residue protein sequence, read N- to C-terminus: MSDRKNMKLFALNSNQEIAQKIAQAVGVPLGKLSSRQFSDGEIQVNIEESVRGYDVYIIQSTSFPVNNHLMELLIMVDACVRASAHSINVVLPYFGYARQDRIACPREPLTAKLVANMLVKAGVDRILTLDLHAVQVQGFFDIPVDNLFTVPLFAKHYCDKGLLGSDVVVVSPKNSGVKRARSLAEYLDAPIAIIDYPQDDATRNEGYIIGDVEGKKAILIDDILNTGRTFSEASKIVEREGATEIYAVSSHGLFVEGAAELLDNTNIKEILVTDSVATKEKTPKNVCYITASELIGDAIVRIHERKPVSPLFAYNKKK.

ATP-binding positions include 40–42 and 99–100; these read DGE and RQ. Position 133 (His133) interacts with Mg(2+). D-ribose 5-phosphate contacts are provided by residues Asp222 and 226–230; that span reads NTGRT.

The protein belongs to the ribose-phosphate pyrophosphokinase family. Class I subfamily. Homohexamer. The cofactor is Mg(2+).

It is found in the cytoplasm. It catalyses the reaction D-ribose 5-phosphate + ATP = 5-phospho-alpha-D-ribose 1-diphosphate + AMP + H(+). It functions in the pathway metabolic intermediate biosynthesis; 5-phospho-alpha-D-ribose 1-diphosphate biosynthesis; 5-phospho-alpha-D-ribose 1-diphosphate from D-ribose 5-phosphate (route I): step 1/1. Functionally, involved in the biosynthesis of the central metabolite phospho-alpha-D-ribosyl-1-pyrophosphate (PRPP) via the transfer of pyrophosphoryl group from ATP to 1-hydroxyl of ribose-5-phosphate (Rib-5-P). The protein is Putative ribose-phosphate pyrophosphokinase 2 of Streptococcus pneumoniae serotype 4 (strain ATCC BAA-334 / TIGR4).